A 208-amino-acid chain; its full sequence is Holliday junction branch migration complex subunit RuvA (208 aa).

The domain I stretch occupies residues 1 to 67 (MIGWLHGTIG…EDGQQLYGFE (67 aa)). A domain II region spans residues 68–146 (TKADRNLFRL…ERWQQQGGST (79 aa)). The tract at residues 147–157 (PLRLVEPVAES) is flexible linker. Residues 157-208 (SRELRATLEALGYGPEEVSAAVAQAGSQGLDPEQPMEEWLRHCLAWLSRQAG) are domain III.

The protein belongs to the RuvA family. As to quaternary structure, homotetramer. Forms an RuvA(8)-RuvB(12)-Holliday junction (HJ) complex. HJ DNA is sandwiched between 2 RuvA tetramers; dsDNA enters through RuvA and exits via RuvB. An RuvB hexamer assembles on each DNA strand where it exits the tetramer. Each RuvB hexamer is contacted by two RuvA subunits (via domain III) on 2 adjacent RuvB subunits; this complex drives branch migration. In the full resolvosome a probable DNA-RuvA(4)-RuvB(12)-RuvC(2) complex forms which resolves the HJ.

It is found in the cytoplasm. Its function is as follows. The RuvA-RuvB-RuvC complex processes Holliday junction (HJ) DNA during genetic recombination and DNA repair, while the RuvA-RuvB complex plays an important role in the rescue of blocked DNA replication forks via replication fork reversal (RFR). RuvA specifically binds to HJ cruciform DNA, conferring on it an open structure. The RuvB hexamer acts as an ATP-dependent pump, pulling dsDNA into and through the RuvAB complex. HJ branch migration allows RuvC to scan DNA until it finds its consensus sequence, where it cleaves and resolves the cruciform DNA. This Synechococcus sp. (strain RCC307) protein is Holliday junction branch migration complex subunit RuvA.